A 331-amino-acid polypeptide reads, in one-letter code: Flavonol synthase 1 (331 aa).

A Fe2OG dioxygenase domain is found at 191–292 (DAIELLLKIN…RMSWPVFCSP (102 aa)). Fe cation is bound by residues His-217, Asp-219, and His-273. Arg-283 provides a ligand contact to 2-oxoglutarate.

The protein belongs to the iron/ascorbate-dependent oxidoreductase family. L-ascorbate is required as a cofactor. Requires Fe(2+) as cofactor. Expressed in young cromes.

It carries out the reaction a (2R,3R)-dihydroflavonol + 2-oxoglutarate + O2 = a flavonol + succinate + CO2 + H2O. It catalyses the reaction (2R,3R)-dihydrokaempferol + 2-oxoglutarate + O2 = kaempferol + succinate + CO2 + H2O + H(+). The catalysed reaction is (2R,3R)-dihydroquercetin + 2-oxoglutarate + O2 = quercetin + succinate + CO2 + H2O + H(+). The enzyme catalyses (2R,3R)-dihydromyricetin + 2-oxoglutarate + O2 = myricetin + succinate + CO2 + H2O + H(+). It functions in the pathway flavonoid metabolism. Functionally, catalyzes the formation of flavonols from dihydroflavonols. Can act on dihydrokaempferol to produce kaempferol, on dihydroquercetin to produce quercitin and on dihydromyricetin to produce myricetin. This chain is Flavonol synthase 1, found in Crocosmia x crocosmiiflora (Montbretia).